The sequence spans 179 residues: Bifunctional protein PyrR (179 aa).

The PRPP-binding motif lies at 100 to 112; that stretch reads VILVDDVLFTGRT.

The protein belongs to the purine/pyrimidine phosphoribosyltransferase family. PyrR subfamily. Homodimer and homohexamer; in equilibrium.

The catalysed reaction is UMP + diphosphate = 5-phospho-alpha-D-ribose 1-diphosphate + uracil. Its function is as follows. Regulates transcriptional attenuation of the pyrimidine nucleotide (pyr) operon by binding in a uridine-dependent manner to specific sites on pyr mRNA. This disrupts an antiterminator hairpin in the RNA and favors formation of a downstream transcription terminator, leading to a reduced expression of downstream genes. Functionally, also displays a weak uracil phosphoribosyltransferase activity which is not physiologically significant. This chain is Bifunctional protein PyrR, found in Geobacillus thermodenitrificans (strain NG80-2).